The following is a 419-amino-acid chain: Gamma-glutamyl phosphate reductase (419 aa).

It belongs to the gamma-glutamyl phosphate reductase family.

It is found in the cytoplasm. The enzyme catalyses L-glutamate 5-semialdehyde + phosphate + NADP(+) = L-glutamyl 5-phosphate + NADPH + H(+). The protein operates within amino-acid biosynthesis; L-proline biosynthesis; L-glutamate 5-semialdehyde from L-glutamate: step 2/2. Functionally, catalyzes the NADPH-dependent reduction of L-glutamate 5-phosphate into L-glutamate 5-semialdehyde and phosphate. The product spontaneously undergoes cyclization to form 1-pyrroline-5-carboxylate. In Oleidesulfovibrio alaskensis (strain ATCC BAA-1058 / DSM 17464 / G20) (Desulfovibrio alaskensis), this protein is Gamma-glutamyl phosphate reductase.